A 90-amino-acid chain; its full sequence is Putative sodium channel toxin Ts28 (90 aa).

The first 23 residues, 1–23 (MKISLVTWLITALCLMEIEEIDG), serve as a signal peptide directing secretion. The region spanning 26–86 (PGNYPVDFQG…FWDVMKKQCD (61 aa)) is the LCN-type CS-alpha/beta domain. 3 cysteine pairs are disulfide-bonded: Cys40-Cys60, Cys46-Cys65, and Cys50-Cys67.

It belongs to the long (3 C-C) scorpion toxin superfamily. In terms of assembly, monomer (edited version) and heterodimer (non-edited version) of this alpha chain and a beta chain (AC P0CI43). As to expression, expressed by the venom gland.

The protein resides in the secreted. Functionally, the edited BmKBTx-like may modulate voltage-gated sodium channels (Nav). The non-edited form is able to form a heterodimer. In orthologs, a heterodimer with LVP beta-chain induces lipolysis in rat adipocytes, which is mediated through the beta-2 adrenergic receptor pathway (ADRB2). Since no LVP beta-chains have been identified in the venom of this scorpion, it is possible that this protein is not involved in a lipolysis process. This Tityus serrulatus (Brazilian scorpion) protein is Putative sodium channel toxin Ts28.